The primary structure comprises 182 residues: Alkyl hydroperoxide reductase AhpD (182 aa).

The active-site Proton donor is the cysteine 132. A disulfide bridge connects residues cysteine 132 and cysteine 135. Catalysis depends on cysteine 135, which acts as the Cysteine sulfenic acid (-SOH) intermediate.

The protein belongs to the AhpD family.

It carries out the reaction N(6)-[(R)-dihydrolipoyl]-L-lysyl-[lipoyl-carrier protein] + a hydroperoxide = N(6)-[(R)-lipoyl]-L-lysyl-[lipoyl-carrier protein] + an alcohol + H2O. In terms of biological role, antioxidant protein with alkyl hydroperoxidase activity. Required for the reduction of the AhpC active site cysteine residues and for the regeneration of the AhpC enzyme activity. The polypeptide is Alkyl hydroperoxide reductase AhpD (Bradyrhizobium diazoefficiens (strain JCM 10833 / BCRC 13528 / IAM 13628 / NBRC 14792 / USDA 110)).